The following is a 480-amino-acid chain: RAC-alpha serine/threonine-protein kinase (480 aa).

In terms of domain architecture, PH spans 5–108 (AIVKEGWLHK…WTTAIQTVAD (104 aa)). Lys-14 and Lys-20 each carry N6-acetyllysine. Residue 14–19 (KRGEYI) participates in 1D-myo-inositol 1,3,4,5-tetrakisphosphate binding. Residues 23–25 (RPR) and Asn-53 contribute to the 1D-myo-inositol 1,3,4,5-tetrakisphosphate site. Cysteines 60 and 77 form a disulfide. Arg-86 contributes to the 1D-myo-inositol 1,3,4,5-tetrakisphosphate binding site. Ser-124 bears the Phosphoserine mark. Ser-129 is subject to Phosphoserine; alternate. O-linked (GlcNAc) serine; alternate glycosylation occurs at Ser-129. In terms of domain architecture, Protein kinase spans 150-408 (FEYLKLLGKG…AKEIMQHRFF (259 aa)). 156-164 (LGKGTFGKV) contacts ATP. Position 176 is a phosphotyrosine; by TNK2 (Tyr-176). Lys-179 is an ATP binding site. Asp-274 acts as the Proton acceptor in catalysis. Residue Lys-284 forms a Glycyl lysine isopeptide (Lys-Gly) (interchain with G-Cter in ubiquitin) linkage. A disulfide bridge connects residues Cys-296 and Cys-310. Thr-305 carries an O-linked (GlcNAc) threonine glycan. A Phosphothreonine; by PDPK1 modification is found at Thr-308. Thr-312 carries O-linked (GlcNAc) threonine glycosylation. Residues 409-480 (ASIVWQDVYE…QFSYSASATA (72 aa)) form the AGC-kinase C-terminal domain. Thr-448 is modified (phosphothreonine). Position 450 is a phosphothreonine; by MTOR (Thr-450). The interval 450–480 (TPPDQDDSMEGVDSERRPHFPQFSYSASATA) is disordered. Ser-473 carries O-linked (GlcNAc) serine; alternate glycosylation. Ser-473 bears the Phosphoserine; by MTOR; alternate mark. Residue Tyr-474 is modified to Phosphotyrosine. Ser-477 carries the phosphoserine modification. Thr-479 is modified (phosphothreonine).

The protein belongs to the protein kinase superfamily. AGC Ser/Thr protein kinase family. RAC subfamily. In terms of assembly, interacts (via the C-terminus) with CCDC88A (via its C-terminus) and THEM4 (via its C-terminus). Interacts with AKTIP. Interacts (via PH domain) with MTCP1, TCL1A and TCL1B. Interacts with TRAF6. Interacts with GRB10; the interaction leads to GRB10 phosphorylation thus promoting YWHAE binding. Interacts with RARA; the interaction phosphorylates RARA and represses its transactivation activity. Interacts with MAP3K5 and TNK2. Interacts with BAD, CLK2, PPP2R5B, STK3 and STK4. Interacts (via PH domain) with SIRT1. Interacts with SRPK2 in a phosphorylation-dependent manner. Interacts with RAF1. Interacts with PKN2 (via C-terminal domain); the interaction occurs with the C-terminus cleavage products of PKN2 in apoptotic cells. Interacts with TRIM13; the interaction ubiquitinates AKT1 leading to its proteasomal degradation. Interacts with and phosphorylated by PDPK1. Interacts with BTBD10. Interacts with KCTD20. Interacts with PA2G4. Interacts with PA2G4. Interacts with KIF14; the interaction is detected in the plasma membrane upon INS stimulation and promotes AKT1 phosphorylation. Interacts with FAM83B; activates the PI3K/AKT signaling cascade. Interacts with WDFY2 (via WD repeats 1-3). Forms a complex with WDFY2 and FOXO1. Interacts with FAM168A. Interacts with SYAP1 (via phosphorylated form and BSD domain); this interaction is enhanced in a mTORC2-mediated manner in response to epidermal growth factor (EGF) stimulation and activates AKT1. Interacts with PKHM3. Interacts with FKBP5/FKBP51; promoting interaction between Akt/AKT1 and PHLPP1, thereby enhancing dephosphorylation and subsequent activation of Akt/AKT1. Interacts with TMEM175; leading to formation of the lysoK(GF) complex. In terms of processing, O-GlcNAcylation at Thr-305 and Thr-312 inhibits activating phosphorylation at Thr-308 via disrupting the interaction between AKT1 and PDPK1. O-GlcNAcylation at Ser-473 also probably interferes with phosphorylation at this site. Post-translationally, phosphorylation on Thr-308, Ser-473 and Tyr-474 is required for full activity. Phosphorylation of the activation loop at Thr-308 by PDPK1/PDK1 is a prerequisite for full activation. Phosphorylation by mTORC2 in response to growth factors plays a key role in AKT1 activation: mTORC2 phosphorylates different sites depending on the context, such as Thr-450, Ser-473, Ser-477 or Thr-479, thereby facilitating subsequent phosphorylation of the activation loop by PDPK1/PDK1. Phosphorylation at Ser-473 by mTORC2 promotes ubiquitination and degradation by the proteasome. Also phosphorylated at Ser-477 and Thr-479 by CDK2, facilitating subsequent phosphorylation of the activation loop by PDPK1/PDK1. Activated TNK2 phosphorylates it on Tyr-176 resulting in its binding to the anionic plasma membrane phospholipid PA. This phosphorylated form localizes to the cell membrane, where it is targeted by PDPK1 and PDPK2 for further phosphorylations on Thr-308 and Ser-473 leading to its activation. Phosphorylated at Thr-308 and Ser-473 by IKBKE and TBK1. Ser-473 phosphorylation is enhanced by interaction with AGAP2 isoform 2 (PIKE-A). Ser-473 phosphorylation is enhanced by signaling through activated FLT3. Ser-473 is dephosphorylated by PHLPP. Dephosphorylated at Thr-308 and Ser-473 by PP2A phosphatase. The phosphorylated form of PPP2R5B is required for bridging AKT1 with PP2A phosphatase. Ser-473 is dephosphorylated by CPPED1, leading to termination of signaling. AIM2 acts as an inhibitor of AKT1 by inhibiting phosphorylation Ser-473: AIM2 acts both by inhibiting the activity of PRKDC/DNA-PK kinase and promoting dephosphorylation by PP2A phosphatase. Ubiquitinated; undergoes both 'Lys-48'- and 'Lys-63'-linked polyubiquitination. TRAF6-induced 'Lys-63'-linked AKT1 ubiquitination is critical for phosphorylation and activation. When ubiquitinated, it translocates to the plasma membrane, where it becomes phosphorylated. When fully phosphorylated and translocated into the nucleus, undergoes 'Lys-48'-polyubiquitination catalyzed by TTC3, leading to its degradation by the proteasome. Ubiquitinated via 'Lys-48'-linked polyubiquitination by ZNRF1, leading to its degradation by the proteasome. Also ubiquitinated by TRIM13 leading to its proteasomal degradation. Phosphorylated, undergoes 'Lys-48'-linked polyubiquitination preferentially at Lys-284 catalyzed by MUL1, leading to its proteasomal degradation. In terms of processing, acetylated on Lys-14 and Lys-20 by the histone acetyltransferases EP300 and KAT2B. Acetylation results in reduced phosphorylation and inhibition of activity. Deacetylated at Lys-14 and Lys-20 by SIRT1. SIRT1-mediated deacetylation relieves the inhibition. Post-translationally, cleavage by caspase-3/CASP3. Cleaved at the caspase-3 consensus site Asp-462 during apoptosis, resulting in down-regulation of the AKT signaling pathway and decreased cell survival.

The protein localises to the cytoplasm. It is found in the nucleus. Its subcellular location is the cell membrane. It localises to the mitochondrion intermembrane space. It carries out the reaction L-seryl-[protein] + ATP = O-phospho-L-seryl-[protein] + ADP + H(+). The enzyme catalyses L-threonyl-[protein] + ATP = O-phospho-L-threonyl-[protein] + ADP + H(+). Its function is as follows. AKT1 is one of 3 closely related serine/threonine-protein kinases (AKT1, AKT2 and AKT3) called the AKT kinase, and which regulate many processes including metabolism, proliferation, cell survival, growth and angiogenesis. This is mediated through serine and/or threonine phosphorylation of a range of downstream substrates. Over 100 substrate candidates have been reported so far, but for most of them, no isoform specificity has been reported. AKT is responsible of the regulation of glucose uptake by mediating insulin-induced translocation of the SLC2A4/GLUT4 glucose transporter to the cell surface. Phosphorylation of PTPN1 at 'Ser-50' negatively modulates its phosphatase activity preventing dephosphorylation of the insulin receptor and the attenuation of insulin signaling. Phosphorylation of TBC1D4 triggers the binding of this effector to inhibitory 14-3-3 proteins, which is required for insulin-stimulated glucose transport. AKT also regulates the storage of glucose in the form of glycogen by phosphorylating GSK3A at 'Ser-21' and GSK3B at 'Ser-9', resulting in inhibition of its kinase activity. Phosphorylation of GSK3 isoforms by AKT is also thought to be one mechanism by which cell proliferation is driven. AKT also regulates cell survival via the phosphorylation of MAP3K5 (apoptosis signal-related kinase). Phosphorylation of 'Ser-83' decreases MAP3K5 kinase activity stimulated by oxidative stress and thereby prevents apoptosis. AKT mediates insulin-stimulated protein synthesis by phosphorylating TSC2 at 'Ser-939' and 'Thr-1462', thereby activating the mTORC1 signaling pathway, and leading to both phosphorylation of 4E-BP1 and in activation of RPS6KB1. Also regulates the mTORC1 signaling pathway by catalyzing phosphorylation of CASTOR1 and DEPDC5. AKT plays a role as key modulator of the AKT-mTOR signaling pathway controlling the tempo of the process of newborn neurons integration during adult neurogenesis, including correct neuron positioning, dendritic development and synapse formation. Part of a positive feedback loop of mTORC2 signaling by mediating phosphorylation of MAPKAP1/SIN1, promoting mTORC2 activation. AKT is involved in the phosphorylation of members of the FOXO factors (Forkhead family of transcription factors), leading to binding of 14-3-3 proteins and cytoplasmic localization. In particular, FOXO1 is phosphorylated at 'Thr-24', 'Ser-256' and 'Ser-319'. FOXO3 and FOXO4 are phosphorylated on equivalent sites. AKT has an important role in the regulation of NF-kappa-B-dependent gene transcription and positively regulates the activity of CREB1 (cyclic AMP (cAMP)-response element binding protein). The phosphorylation of CREB1 induces the binding of accessory proteins that are necessary for the transcription of pro-survival genes such as BCL2 and MCL1. AKT phosphorylates 'Ser-454' on ATP citrate lyase (ACLY), thereby potentially regulating ACLY activity and fatty acid synthesis. Activates the 3B isoform of cyclic nucleotide phosphodiesterase (PDE3B) via phosphorylation of 'Ser-273', resulting in reduced cyclic AMP levels and inhibition of lipolysis. Phosphorylates PIKFYVE on 'Ser-318', which results in increased PI(3)P-5 activity. The Rho GTPase-activating protein DLC1 is another substrate and its phosphorylation is implicated in the regulation cell proliferation and cell growth. Signals downstream of phosphatidylinositol 3-kinase (PI(3)K) to mediate the effects of various growth factors such as platelet-derived growth factor (PDGF), epidermal growth factor (EGF), insulin and insulin-like growth factor 1 (IGF1). AKT mediates the antiapoptotic effects of IGF1. Essential for the SPATA13-mediated regulation of cell migration and adhesion assembly and disassembly. May be involved in the regulation of the placental development. Phosphorylates STK4/MST1 at 'Thr-120' and 'Thr-387' leading to inhibition of its: kinase activity, nuclear translocation, autophosphorylation and ability to phosphorylate FOXO3. Phosphorylates STK3/MST2 at 'Thr-117' and 'Thr-384' leading to inhibition of its: cleavage, kinase activity, autophosphorylation at Thr-180, binding to RASSF1 and nuclear translocation. Phosphorylates SRPK2 and enhances its kinase activity towards SRSF2 and ACIN1 and promotes its nuclear translocation. Phosphorylates RAF1 at 'Ser-259' and negatively regulates its activity. Phosphorylation of BAD stimulates its pro-apoptotic activity. Phosphorylates KAT6A at 'Thr-369' and this phosphorylation inhibits the interaction of KAT6A with PML and negatively regulates its acetylation activity towards p53/TP53. Phosphorylates palladin (PALLD), modulating cytoskeletal organization and cell motility. Phosphorylates prohibitin (PHB), playing an important role in cell metabolism and proliferation. Phosphorylates CDKN1A, for which phosphorylation at 'Thr-145' induces its release from CDK2 and cytoplasmic relocalization. These recent findings indicate that the AKT1 isoform has a more specific role in cell motility and proliferation. Phosphorylates CLK2 thereby controlling cell survival to ionizing radiation. Phosphorylates PCK1 at 'Ser-90', reducing the binding affinity of PCK1 to oxaloacetate and changing PCK1 into an atypical protein kinase activity using GTP as donor. Also acts as an activator of TMEM175 potassium channel activity in response to growth factors: forms the lysoK(GF) complex together with TMEM175 and acts by promoting TMEM175 channel activation, independently of its protein kinase activity. Acts as a negative regulator of the cGAS-STING pathway by mediating phosphorylation of CGAS during mitosis, leading to its inhibition. Acts as a regulator of mitochondrial calcium uptake by mediating phosphorylation of MICU1 in the mitochondrial intermembrane space, impairing MICU1 maturation. Acts as an inhibitor of tRNA methylation by mediating phosphorylation of the N-terminus of METTL1, thereby inhibiting METTL1 methyltransferase activity. In response to LPAR1 receptor pathway activation, phosphorylates Rabin8/RAB3IP which alters its activity and phosphorylates WDR44 which induces WDR44 binding to Rab11, thereby switching Rab11 vesicular function from preciliary trafficking to endocytic recycling. The chain is RAC-alpha serine/threonine-protein kinase (AKT1) from Bos taurus (Bovine).